A 528-amino-acid polypeptide reads, in one-letter code: UDP-glucuronosyltransferase 2A2 (528 aa).

The N-terminal stretch at 1–21 (MIKKVLQLLIFHLTLAEIVLS) is a signal peptide. At 22–494 (GNVVVWPTDG…FQYHSLDVIG (473 aa)) the chain is on the extracellular side. 2 N-linked (GlcNAc...) asparagine glycosylation sites follow: Asn-48 and Asn-314. Residues 495–515 (FLLACVASAILLVAKCCLFIF) traverse the membrane as a helical segment. Residues 516–528 (QKVGKTGKKKKRD) lie on the Cytoplasmic side of the membrane.

It belongs to the UDP-glycosyltransferase family.

The protein localises to the membrane. The enzyme catalyses glucuronate acceptor + UDP-alpha-D-glucuronate = acceptor beta-D-glucuronoside + UDP + H(+). It catalyses the reaction 17alpha-estradiol + UDP-alpha-D-glucuronate = 17alpha-estradiol 3-O-(beta-D-glucuronate) + UDP + H(+). It carries out the reaction 17beta-estradiol + UDP-alpha-D-glucuronate = 17beta-estradiol 3-O-(beta-D-glucuronate) + UDP + H(+). The catalysed reaction is chenodeoxycholate + UDP-alpha-D-glucuronate = chenodeoxycholoyl-24-O-(beta-D-glucuronate) + UDP. The enzyme catalyses lithocholate + UDP-alpha-D-glucuronate = lithocholoyl-24-O-(beta-D-glucuronate) + UDP. It catalyses the reaction deoxycholate + UDP-alpha-D-glucuronate = deoxycholoyl-24-O-(beta-D-glucuronate) + UDP. It carries out the reaction hyocholate + UDP-alpha-D-glucuronate = hyocholoyl-24-O-(beta-D-glucuronate) + UDP. The catalysed reaction is hyodeoxycholate + UDP-alpha-D-glucuronate = hyodeoxycholate 6-O-(beta-D-glucuronate) + UDP + H(+). Its function is as follows. UDP-glucuronosyltransferase (UGT) that catalyzes phase II biotransformation reactions in which lipophilic substrates are conjugated with glucuronic acid to increase the metabolite's water solubility, thereby facilitating excretion into either the urine or bile. Essential for the elimination and detoxification of drugs, xenobiotics and endogenous compounds. Catalyzes the glucuronidation of endogenous estrogen hormone estradiol. Contributes to bile acid (BA) detoxification by catalyzing the glucuronidation of BA substrates, which are natural detergents for dietary lipids absorption. Potential role in detoxification of toxic waste compounds in the amniotic fluid before birth, and air-born chemical after birth. This Mus musculus (Mouse) protein is UDP-glucuronosyltransferase 2A2.